The primary structure comprises 261 residues: Putative imidazole glycerol phosphate synthase subunit hisF2 (261 aa).

D138 is an active-site residue.

The protein belongs to the HisA/HisF family. Heterodimer of HisH and HisF.

The protein resides in the cytoplasm. The catalysed reaction is 5-[(5-phospho-1-deoxy-D-ribulos-1-ylimino)methylamino]-1-(5-phospho-beta-D-ribosyl)imidazole-4-carboxamide + L-glutamine = D-erythro-1-(imidazol-4-yl)glycerol 3-phosphate + 5-amino-1-(5-phospho-beta-D-ribosyl)imidazole-4-carboxamide + L-glutamate + H(+). It participates in amino-acid biosynthesis; L-histidine biosynthesis; L-histidine from 5-phospho-alpha-D-ribose 1-diphosphate: step 5/9. Its function is as follows. IGPS catalyzes the conversion of PRFAR and glutamine to IGP, AICAR and glutamate. The HisF subunit catalyzes the cyclization activity that produces IGP and AICAR from PRFAR using the ammonia provided by the HisH subunit. This is Putative imidazole glycerol phosphate synthase subunit hisF2 (hisF2) from Prochlorococcus marinus (strain MIT 9313).